The following is a 203-amino-acid chain: Thymidylate kinase (203 aa).

Residue 7-14 (GPDGSGKS) participates in ATP binding.

The protein belongs to the thymidylate kinase family.

It catalyses the reaction dTMP + ATP = dTDP + ADP. Phosphorylation of dTMP to form dTDP in both de novo and salvage pathways of dTTP synthesis. This Finegoldia magna (strain ATCC 29328 / DSM 20472 / WAL 2508) (Peptostreptococcus magnus) protein is Thymidylate kinase.